A 440-amino-acid chain; its full sequence is Chitinase-like protein Idgf2 (440 aa).

Positions 1–20 (MKAWIWFTFVACLFAASTEA) are cleaved as a signal peptide. A GH18 domain is found at 22 to 440 (SNLVCYYDSS…PILRAIKYRL (419 aa)). Cys-26 and Cys-53 form a disulfide bridge. Asn-220 is a glycosylation site (N-linked (GlcNAc...) asparagine). Cysteines 342 and 425 form a disulfide.

It belongs to the glycosyl hydrolase 18 family. IDGF subfamily. In terms of processing, glycosylated. As to expression, primarily expressed in yolk cells and fat body. In larvae, it is expressed in the imaginal ring and weakly expressed in imaginal disks. More strongly expressed than Idgf1 and Idgf3.

The protein localises to the secreted. Cooperates with insulin-like peptides to stimulate the proliferation, polarization and motility of imaginal disk cells. May act by stabilizing the binding of insulin-like peptides to its receptor through a simultaneous interaction with both molecules to form a multiprotein signaling complex. The polypeptide is Chitinase-like protein Idgf2 (Idgf2) (Drosophila melanogaster (Fruit fly)).